The primary structure comprises 274 residues: Merozoite surface protein 2 (274 aa).

The signal sequence occupies residues 1 to 20 (MKVIKTLSIINFFIFVTFNI). Residues Asn22 and Asn36 are each glycosylated (N-linked (GlcNAc...) asparagine). The tract at residues 43-234 (MAESKPPTGT…SDSQKECTDG (192 aa)) is disordered. The polymorphic region stretch occupies residues 44–200 (AESKPPTGTG…EQTESPELQS (157 aa)). 2 repeat units span residues 53–62 (GASGSAGSGA) and 63–72 (GASGSAGSGD). Residues 53–72 (GASGSAGSGAGASGSAGSGD) form a 2 X 10 AA tandem repeats of G-A-S-G-S-A-G-S-G-[AD] region. A compositionally biased stretch (gly residues) spans 53 to 72 (GASGSAGSGAGASGSAGSGD). Over residues 91–121 (SSSTPATTTTTTTTTTTTTTNDAEASTSTSS) the composition is skewed to low complexity. Polar residues-rich tracts occupy residues 122–131 (ENPNHNNAET), 140–167 (QKSN…NVPP), and 174–202 (KSPT…QSAP). An N-linked (GlcNAc...) asparagine glycan is attached at Asn151. Asn223 carries an N-linked (GlcNAc...) asparagine glycan. Cys231 and Cys239 are joined by a disulfide. Asn248 carries N-linked (GlcNAc...) asparagine glycosylation. Asn248 carries the GPI-anchor amidated asparagine lipid modification. The propeptide at 249 to 274 (SSNIASINKFVVLISAKLVLSFAIFI) is removed in mature form.

It localises to the cell membrane. Functionally, may play a role in the merozoite attachment to the erythrocyte. The chain is Merozoite surface protein 2 from Plasmodium falciparum (isolate kf1916).